Consider the following 49-residue polypeptide: MNQARIWLVVKPSVGLPLLLGVVLLIALLVHGAILTNTSWYPTYFEGNW.

Topologically, residues 1-14 (MNQARIWLVVKPSV) are cytoplasmic. A helical transmembrane segment spans residues 15 to 35 (GLPLLLGVVLLIALLVHGAIL). Histidine 31 contributes to the a bacteriochlorophyll binding site. At 36 to 49 (TNTSWYPTYFEGNW) the chain is on the periplasmic side.

The protein belongs to the antenna complex alpha subunit family. In terms of assembly, the core complex is formed by different alpha and beta chains, binding bacteriochlorophyll molecules, and arranged most probably in tetrameric structures disposed around the reaction center. The non-pigmented gamma chains may constitute additional components.

Its subcellular location is the cell inner membrane. Functionally, antenna complexes are light-harvesting systems, which transfer the excitation energy to the reaction centers. The sequence is that of Light-harvesting protein B800/850/890 alpha-3 chain from Halorhodospira halophila (strain DSM 244 / SL1) (Ectothiorhodospira halophila (strain DSM 244 / SL1)).